The chain runs to 169 residues: MQVDVDLQDAYSSSTAQVPIAAETWLTWFNRWFELLHPSLPPACSYELCLRLTDDGEIASLNSFYRQQPQPTDVLAFAALEVEVPRSPPDQTELLHLGDIVISVDTAQRQSLAGQHSLTVELAWLAAHGFLHLLGWDHPDPASLEQMLKQQSILLAAVGLENPALESFI.

Residues H128, H132, and H138 each coordinate Zn(2+).

This sequence belongs to the endoribonuclease YbeY family. It depends on Zn(2+) as a cofactor.

It is found in the cytoplasm. In terms of biological role, single strand-specific metallo-endoribonuclease involved in late-stage 70S ribosome quality control and in maturation of the 3' terminus of the 16S rRNA. This chain is Endoribonuclease YbeY, found in Cyanothece sp. (strain PCC 7425 / ATCC 29141).